A 198-amino-acid chain; its full sequence is Alpha-S1-casein (198 aa).

The N-terminal stretch at 1–15 (MKLLILTCLVASAVA) is a signal peptide. 2 disordered regions span residues 28 to 47 (QTQRGGSSSSSSSEERLKEE) and 71 to 97 (SESTEQREASSISSSEEVVPKNTEQKH). S39, S80, S81, S83, S84, and S85 each carry phosphoserine.

It belongs to the alpha-casein family. As to expression, mammary gland specific. Secreted in milk.

It is found in the secreted. Its function is as follows. Important role in the capacity of milk to transport calcium phosphate. In Cavia porcellus (Guinea pig), this protein is Alpha-S1-casein (CSN1S1).